Reading from the N-terminus, the 398-residue chain is Inner membrane protein YjgN (398 aa).

Residues 1–24 (MAQVINEMDVPSHSFVFHGTGERY) are Cytoplasmic-facing. A helical membrane pass occupies residues 25 to 45 (FLICVVNVLLTIITLGIYLPW). At 46-73 (ALMKCKRYLYANMEVNGQRFSYGITGGN) the chain is on the periplasmic side. The helical transmembrane segment at 74 to 94 (VFFSCLVFVFFYFAILMTVSA) threads the bilayer. Position 95 (Asp-95) is a topological domain, cytoplasmic. A helical membrane pass occupies residues 96–116 (MPLIGCVLTLSLLVLLIFMAA). Over 117 to 142 (KGLRYQALMTSLNGVRFSFNCSMKGV) the chain is Periplasmic. Residues 143 to 163 (WWVTFFLPILMAIGMGTVFFI) traverse the membrane as a helical segment. The Cytoplasmic segment spans residues 164-175 (STKMLHANSSSS). The chain crosses the membrane as a helical span at residues 176–196 (VIVSVVLMAIVGIVSIGIFNG). The Periplasmic portion of the chain corresponds to 197–228 (TLYSLVMSFLWSNTSFGIHRFKVKLDTAYCIK). The chain crosses the membrane as a helical span at residues 229–249 (YAILAFLALLPFLAVAGYIIF). At 250–278 (DQILNAYDSSVYANDDIENLQQFMEMQRK) the chain is on the cytoplasmic side. Residues 279–299 (MIIAQLIYYFGIAVSTSYLTV) form a helical membrane-spanning segment. Residues 300-333 (SLRNHFMSNLSLNDGRIRFRSTLTYHGMLYRMCA) are Periplasmic-facing. Residues 334–354 (LVVISGITGGLAYPLLKIWMI) form a helical membrane-spanning segment. The Cytoplasmic portion of the chain corresponds to 355-398 (DWQAKNTYLLGDLDDLPLINKEEQPDKGFLASISRGIMPSLPFL).

It is found in the cell inner membrane. This Escherichia coli O157:H7 protein is Inner membrane protein YjgN (yjgN).